We begin with the raw amino-acid sequence, 1057 residues long: Carbamoyl phosphate synthase large chain (1057 aa).

The interval 1 to 401 (MPKRNDIKTI…SLLKAIRSLE (401 aa)) is carboxyphosphate synthetic domain. Positions 129, 169, 175, 176, 208, 210, 215, 241, 242, 243, 284, and 298 each coordinate ATP. Positions 133–327 (RTLMNDLNVP…IAKLAAKIAV (195 aa)) constitute an ATP-grasp 1 domain. 3 residues coordinate Mg(2+): Gln284, Glu298, and Asn300. The Mn(2+) site is built by Gln284, Glu298, and Asn300. An oligomerization domain region spans residues 402–546 (YGVHHLGLPN…YGTYETENES (145 aa)). Residues 547–929 (IVTDKEKILV…ALFKGLTGSG (383 aa)) form a carbamoyl phosphate synthetic domain region. The 191-residue stretch at 671–861 (EALLRKINVP…MAQLAMRAII (191 aa)) folds into the ATP-grasp 2 domain. ATP contacts are provided by Arg707, Arg746, Leu748, Glu752, Gly777, Val778, His779, Ser780, Gln820, and Glu832. Mg(2+)-binding residues include Gln820, Glu832, and Asn834. Gln820, Glu832, and Asn834 together coordinate Mn(2+). Residues 930 to 1057 (VEVKDHGTVL…ESMTFTMRQM (128 aa)) form the MGS-like domain. The allosteric domain stretch occupies residues 930 to 1057 (VEVKDHGTVL…ESMTFTMRQM (128 aa)).

The protein belongs to the CarB family. As to quaternary structure, composed of two chains; the small (or glutamine) chain promotes the hydrolysis of glutamine to ammonia, which is used by the large (or ammonia) chain to synthesize carbamoyl phosphate. Tetramer of heterodimers (alpha,beta)4. Mg(2+) is required as a cofactor. Requires Mn(2+) as cofactor.

The enzyme catalyses hydrogencarbonate + L-glutamine + 2 ATP + H2O = carbamoyl phosphate + L-glutamate + 2 ADP + phosphate + 2 H(+). It catalyses the reaction hydrogencarbonate + NH4(+) + 2 ATP = carbamoyl phosphate + 2 ADP + phosphate + 2 H(+). It functions in the pathway amino-acid biosynthesis; L-arginine biosynthesis; carbamoyl phosphate from bicarbonate: step 1/1. The protein operates within pyrimidine metabolism; UMP biosynthesis via de novo pathway; (S)-dihydroorotate from bicarbonate: step 1/3. Large subunit of the glutamine-dependent carbamoyl phosphate synthetase (CPSase). CPSase catalyzes the formation of carbamoyl phosphate from the ammonia moiety of glutamine, carbonate, and phosphate donated by ATP, constituting the first step of 2 biosynthetic pathways, one leading to arginine and/or urea and the other to pyrimidine nucleotides. The large subunit (synthetase) binds the substrates ammonia (free or transferred from glutamine from the small subunit), hydrogencarbonate and ATP and carries out an ATP-coupled ligase reaction, activating hydrogencarbonate by forming carboxy phosphate which reacts with ammonia to form carbamoyl phosphate. This Staphylococcus aureus (strain Mu3 / ATCC 700698) protein is Carbamoyl phosphate synthase large chain.